The primary structure comprises 336 residues: PHD finger protein 11 (336 aa).

Residues 1–20 are disordered; the sequence is MAEETAPPCGPVSTGGSLSP. The C2HC pre-PHD-type zinc-finger motif lies at 25–61; it reads KRTCALCPDGHEWSVIYFAPSANIAAHENCLLYSSGL. The segment at 91–143 adopts a PHD-type zinc-finger fold; it reads LKCSLCNKGGATVGCDLSSCRKSYHYVCAKKDHAIPQVDEDLGTYKIFCPEHP. Disordered regions lie at residues 139–179 and 303–336; these read CPEH…KKMK and DPSG…GDSL. Residues 303–314 show a composition bias toward low complexity; that stretch reads DPSGSTSGSLLP.

In terms of assembly, interacts with BRCA1 and RELA.

The protein resides in the nucleus. Its function is as follows. Positive regulator of Th1-type cytokine gene expression. This Rattus norvegicus (Rat) protein is PHD finger protein 11 (Phf11).